Reading from the N-terminus, the 258-residue chain is ATP synthase subunit a (258 aa).

5 consecutive transmembrane segments (helical) span residues Lys-38–Ala-58, Trp-94–Phe-114, Tyr-118–Thr-138, Ile-193–Pro-213, and Ala-215–Ile-235.

It belongs to the ATPase A chain family. F-type ATPases have 2 components, CF(1) - the catalytic core - and CF(0) - the membrane proton channel. CF(1) has five subunits: alpha(3), beta(3), gamma(1), delta(1), epsilon(1). CF(0) has three main subunits: a(1), b(2) and c(9-12). The alpha and beta chains form an alternating ring which encloses part of the gamma chain. CF(1) is attached to CF(0) by a central stalk formed by the gamma and epsilon chains, while a peripheral stalk is formed by the delta and b chains.

The protein localises to the cell membrane. Its function is as follows. Key component of the proton channel; it plays a direct role in the translocation of protons across the membrane. This chain is ATP synthase subunit a, found in Rubrobacter xylanophilus (strain DSM 9941 / JCM 11954 / NBRC 16129 / PRD-1).